We begin with the raw amino-acid sequence, 144 residues long: Major allergen Blo t 12 (144 aa).

The N-terminal stretch at 1-20 (MKSVLIFLVAIALFSANIVS) is a signal peptide. The interval 24–77 (QTTRGRHTEPDDHHEKPTTQCTHEETTSTQHHHEEVVTTQTPHHEEKTTTEETH) is disordered. The region spanning 92-144 (HVVCHEEGPIHIQEMCNKYIICSKSGSLWYITVMPCSIGTKFDPISRNCVLDN) is the Chitin-binding type-2 domain. An intrachain disulfide couples Cys-127 to Cys-140.

This chain is Major allergen Blo t 12, found in Blomia tropicalis (Mite).